The primary structure comprises 263 residues: 3-deoxy-manno-octulosonate cytidylyltransferase 1 (263 aa).

Belongs to the KdsB family.

The protein resides in the cytoplasm. The enzyme catalyses 3-deoxy-alpha-D-manno-oct-2-ulosonate + CTP = CMP-3-deoxy-beta-D-manno-octulosonate + diphosphate. Its pathway is nucleotide-sugar biosynthesis; CMP-3-deoxy-D-manno-octulosonate biosynthesis; CMP-3-deoxy-D-manno-octulosonate from 3-deoxy-D-manno-octulosonate and CTP: step 1/1. The protein operates within bacterial outer membrane biogenesis; lipopolysaccharide biosynthesis. Functionally, activates KDO (a required 8-carbon sugar) for incorporation into bacterial lipopolysaccharide in Gram-negative bacteria. This is 3-deoxy-manno-octulosonate cytidylyltransferase 1 from Burkholderia ambifaria (strain ATCC BAA-244 / DSM 16087 / CCUG 44356 / LMG 19182 / AMMD) (Burkholderia cepacia (strain AMMD)).